A 380-amino-acid chain; its full sequence is Queuine tRNA-ribosyltransferase (380 aa).

D96 functions as the Proton acceptor in the catalytic mechanism. Substrate-binding positions include 96-100, D150, Q193, and G220; that span reads DSGGF. An RNA binding region spans residues 251 to 257; it reads GVGAPDS. The active-site Nucleophile is the D270. Residues 275–279 are RNA binding; important for wobble base 34 recognition; that stretch reads TRIAR. The Zn(2+) site is built by C308, C310, C313, and H339.

This sequence belongs to the queuine tRNA-ribosyltransferase family. As to quaternary structure, homodimer. Within each dimer, one monomer is responsible for RNA recognition and catalysis, while the other monomer binds to the replacement base PreQ1. Requires Zn(2+) as cofactor.

The enzyme catalyses 7-aminomethyl-7-carbaguanine + guanosine(34) in tRNA = 7-aminomethyl-7-carbaguanosine(34) in tRNA + guanine. It functions in the pathway tRNA modification; tRNA-queuosine biosynthesis. Functionally, catalyzes the base-exchange of a guanine (G) residue with the queuine precursor 7-aminomethyl-7-deazaguanine (PreQ1) at position 34 (anticodon wobble position) in tRNAs with GU(N) anticodons (tRNA-Asp, -Asn, -His and -Tyr). Catalysis occurs through a double-displacement mechanism. The nucleophile active site attacks the C1' of nucleotide 34 to detach the guanine base from the RNA, forming a covalent enzyme-RNA intermediate. The proton acceptor active site deprotonates the incoming PreQ1, allowing a nucleophilic attack on the C1' of the ribose to form the product. After dissociation, two additional enzymatic reactions on the tRNA convert PreQ1 to queuine (Q), resulting in the hypermodified nucleoside queuosine (7-(((4,5-cis-dihydroxy-2-cyclopenten-1-yl)amino)methyl)-7-deazaguanosine). The chain is Queuine tRNA-ribosyltransferase from Streptococcus pneumoniae (strain Hungary19A-6).